Consider the following 153-residue polypeptide: MSEKYVVTWDMLQIHARQLAQRLLPVEQWTGIIAVSRGGLVPAALLARELGIRHVDTVCISSYDHDHQRDLKILKKAEGDGEGFIVVDDLVDTGGTAKVIREMYPKAHFVTIFAKPEGRPLVDDFVVDIPQNTWIEQPWDMGVMFVPPVCDKK.

Residues 37–38 (RG), arginine 69, and 88–96 (DDLVDTGGT) contribute to the 5-phospho-alpha-D-ribose 1-diphosphate site. Arginine 69 contributes to the GMP binding site. Aspartate 89 serves as a coordination point for Mg(2+). 2 residues coordinate guanine: aspartate 92 and isoleucine 135. The xanthine site is built by aspartate 92 and isoleucine 135. GMP is bound by residues 92-96 (DTGGT) and 134-135 (WI).

This sequence belongs to the purine/pyrimidine phosphoribosyltransferase family. XGPT subfamily. Homotetramer. Requires Mg(2+) as cofactor.

Its subcellular location is the cell inner membrane. The catalysed reaction is GMP + diphosphate = guanine + 5-phospho-alpha-D-ribose 1-diphosphate. The enzyme catalyses XMP + diphosphate = xanthine + 5-phospho-alpha-D-ribose 1-diphosphate. It catalyses the reaction IMP + diphosphate = hypoxanthine + 5-phospho-alpha-D-ribose 1-diphosphate. The protein operates within purine metabolism; GMP biosynthesis via salvage pathway; GMP from guanine: step 1/1. Its pathway is purine metabolism; XMP biosynthesis via salvage pathway; XMP from xanthine: step 1/1. Purine salvage pathway enzyme that catalyzes the transfer of the ribosyl-5-phosphate group from 5-phospho-alpha-D-ribose 1-diphosphate (PRPP) to the N9 position of the 6-oxopurines guanine and xanthine to form the corresponding ribonucleotides GMP (guanosine 5'-monophosphate) and XMP (xanthosine 5'-monophosphate), with the release of PPi. To a lesser extent, also acts on hypoxanthine. This Proteus mirabilis (strain HI4320) protein is Xanthine-guanine phosphoribosyltransferase.